The sequence spans 346 residues: tRNA N6-adenosine threonylcarbamoyltransferase (346 aa).

Fe cation-binding residues include histidine 110 and histidine 114. Residues 132 to 136 (LLSGG), aspartate 165, glycine 178, and asparagine 274 contribute to the substrate site. A Fe cation-binding site is contributed by aspartate 298.

The protein belongs to the KAE1 / TsaD family. Requires Fe(2+) as cofactor.

It is found in the cytoplasm. The enzyme catalyses L-threonylcarbamoyladenylate + adenosine(37) in tRNA = N(6)-L-threonylcarbamoyladenosine(37) in tRNA + AMP + H(+). Its function is as follows. Required for the formation of a threonylcarbamoyl group on adenosine at position 37 (t(6)A37) in tRNAs that read codons beginning with adenine. Is involved in the transfer of the threonylcarbamoyl moiety of threonylcarbamoyl-AMP (TC-AMP) to the N6 group of A37, together with TsaE and TsaB. TsaD likely plays a direct catalytic role in this reaction. The chain is tRNA N6-adenosine threonylcarbamoyltransferase from Borreliella burgdorferi (strain ZS7) (Borrelia burgdorferi).